A 467-amino-acid polypeptide reads, in one-letter code: uncharacterized protein (467 aa).

This is an uncharacterized protein from Acanthamoeba polyphaga (Amoeba).